Here is a 165-residue protein sequence, read N- to C-terminus: Endoribonuclease YbeY (165 aa).

Histidine 131, histidine 135, and histidine 141 together coordinate Zn(2+).

It belongs to the endoribonuclease YbeY family. The cofactor is Zn(2+).

It localises to the cytoplasm. In terms of biological role, single strand-specific metallo-endoribonuclease involved in late-stage 70S ribosome quality control and in maturation of the 3' terminus of the 16S rRNA. The protein is Endoribonuclease YbeY of Agathobacter rectalis (strain ATCC 33656 / DSM 3377 / JCM 17463 / KCTC 5835 / VPI 0990) (Eubacterium rectale).